Consider the following 415-residue polypeptide: Adenosylhomocysteinase (415 aa).

Thr-53, Asp-124, and Glu-147 together coordinate substrate. 148-150 (TTT) contacts NAD(+). Substrate is bound by residues Lys-177 and Asp-181. NAD(+) contacts are provided by residues Asn-182, 211–216 (GYGWVG), Glu-234, Asn-269, 290–292 (SGH), and Asn-337.

This sequence belongs to the adenosylhomocysteinase family. The cofactor is NAD(+).

Its subcellular location is the cytoplasm. It carries out the reaction S-adenosyl-L-homocysteine + H2O = L-homocysteine + adenosine. It functions in the pathway amino-acid biosynthesis; L-homocysteine biosynthesis; L-homocysteine from S-adenosyl-L-homocysteine: step 1/1. Its function is as follows. May play a key role in the regulation of the intracellular concentration of adenosylhomocysteine. In Sulfolobus acidocaldarius (strain ATCC 33909 / DSM 639 / JCM 8929 / NBRC 15157 / NCIMB 11770), this protein is Adenosylhomocysteinase.